The chain runs to 1596 residues: A-kinase anchor protein SPHKAP (1596 aa).

Disordered stretches follow at residues 214 to 233 (KHGRLAGQRAAEDDTNRSVS), 242 to 319 (ASEQ…TPKQ), 389 to 432 (DNSE…GHPA), 462 to 481 (SGEEYECEDEEEESETDQGE), and 760 to 809 (EQSD…SSSS). The segment covering 292-306 (TLCTSSNSQKLSRTY) has biased composition (polar residues). The segment covering 462 to 479 (SGEEYECEDEEEESETDQ) has biased composition (acidic residues). Positions 829–846 (FAEDLATTVVSMATELAA) are PKA-RII subunit binding domain. 3 disordered regions span residues 958–1022 (VVDT…ISKQ), 1282–1310 (VGERRHGFKHSRCNNSGNRPGVEHQENSC), and 1328–1443 (VPLI…SSLG). A compositionally biased stretch (polar residues) spans 959 to 971 (VDTSKSGQSSRSR). Residues 1333-1356 (IEPDQREEASEEKGGVETHHREAS) show a composition bias toward basic and acidic residues. The span at 1357–1372 (HQTQQQSGKGSETATK) shows a compositional bias: polar residues. Composition is skewed to low complexity over residues 1398-1409 (LSASSEESGSGS) and 1430-1443 (LSEGNGNSSTSSLG).

This sequence belongs to the AKAP110 family.

The protein localises to the cytoplasm. Its function is as follows. Anchoring protein that mediates the subcellular compartmentation of cAMP-dependent protein kinase (PKA type II). The sequence is that of A-kinase anchor protein SPHKAP (sphkap) from Danio rerio (Zebrafish).